The following is a 446-amino-acid chain: Ribulose bisphosphate carboxylase large chain (446 aa).

2 residues coordinate substrate: asparagine 89 and threonine 139. Lysine 141 functions as the Proton acceptor in the catalytic mechanism. Lysine 143 contributes to the substrate binding site. Mg(2+)-binding residues include lysine 167, aspartate 169, and glutamate 170. Lysine 167 is subject to N6-carboxylysine. Residue histidine 260 is the Proton acceptor of the active site. Residues arginine 261, histidine 293, and serine 345 each coordinate substrate.

Belongs to the RuBisCO large chain family. Type I subfamily. Heterohexadecamer of 8 large chains and 8 small chains; disulfide-linked. The disulfide link is formed within the large subunit homodimers. Mg(2+) is required as a cofactor. Post-translationally, the disulfide bond which can form in the large chain dimeric partners within the hexadecamer appears to be associated with oxidative stress and protein turnover.

It localises to the plastid. It is found in the chloroplast. It catalyses the reaction 2 (2R)-3-phosphoglycerate + 2 H(+) = D-ribulose 1,5-bisphosphate + CO2 + H2O. It carries out the reaction D-ribulose 1,5-bisphosphate + O2 = 2-phosphoglycolate + (2R)-3-phosphoglycerate + 2 H(+). In terms of biological role, ruBisCO catalyzes two reactions: the carboxylation of D-ribulose 1,5-bisphosphate, the primary event in carbon dioxide fixation, as well as the oxidative fragmentation of the pentose substrate in the photorespiration process. Both reactions occur simultaneously and in competition at the same active site. This chain is Ribulose bisphosphate carboxylase large chain, found in Exacum affine (Persian violet).